A 292-amino-acid chain; its full sequence is 33 kDa chaperonin (292 aa).

2 disulfides stabilise this stretch: Cys229/Cys231 and Cys262/Cys265.

This sequence belongs to the HSP33 family. Under oxidizing conditions two disulfide bonds are formed involving the reactive cysteines. Under reducing conditions zinc is bound to the reactive cysteines and the protein is inactive.

The protein resides in the cytoplasm. Redox regulated molecular chaperone. Protects both thermally unfolding and oxidatively damaged proteins from irreversible aggregation. Plays an important role in the bacterial defense system toward oxidative stress. This Photobacterium profundum (strain SS9) protein is 33 kDa chaperonin.